The sequence spans 221 residues: Flagellar L-ring protein 2 (221 aa).

The N-terminal stretch at 1-16 (MKRFLILTPMVLALCG) is a signal peptide. Cys-17 is lipidated: N-palmitoyl cysteine. The S-diacylglycerol cysteine moiety is linked to residue Cys-17.

This sequence belongs to the FlgH family. The basal body constitutes a major portion of the flagellar organelle and consists of four rings (L,P,S, and M) mounted on a central rod.

It is found in the cell outer membrane. The protein localises to the bacterial flagellum basal body. In terms of biological role, assembles around the rod to form the L-ring and probably protects the motor/basal body from shearing forces during rotation. The polypeptide is Flagellar L-ring protein 2 (Yersinia pseudotuberculosis serotype I (strain IP32953)).